The chain runs to 357 residues: MSNSIDSQSLPTVSPTDYARFDPDTIHEKLDASLSRPQLNTDGSIRHFLGIEGLNKAQLQAIIAKAESFFDDKGQLINRPELEGYTVMNLFFEPSTRTRTTFEVAEKRLGANVLNIDIERSSTKKGESLRDTLWNLQAMTADIFVVRHSASGAAHFMATEVTPDIAIINGGDGWHAHPTQGMLDMLTIHREAPRPFEELSVAIVGDIKHSRVARSDISALQTLGVKDIRVCAPRTLLPKGIERFGVQVYENMNECVTDCDVIMGLRIQNERIGSPLLASSSEYYKHYGITPERVALAKPDALVMHPGPMNRGVEIASSVADGAQSVILKQVNNGIAIRMAVLSLAMEGQRAHQAAGH.

Residues 1 to 15 are compositionally biased toward polar residues; sequence MSNSIDSQSLPTVSP. The interval 1 to 21 is disordered; it reads MSNSIDSQSLPTVSPTDYARF. Residues arginine 97 and threonine 98 each coordinate carbamoyl phosphate. An L-aspartate-binding site is contributed by lysine 125. Residues arginine 147, histidine 177, and glutamine 180 each coordinate carbamoyl phosphate. Arginine 211 and arginine 266 together coordinate L-aspartate. Positions 307 and 308 each coordinate carbamoyl phosphate.

The protein belongs to the aspartate/ornithine carbamoyltransferase superfamily. ATCase family. Heterododecamer (2C3:3R2) of six catalytic PyrB chains organized as two trimers (C3), and six regulatory PyrI chains organized as three dimers (R2).

It catalyses the reaction carbamoyl phosphate + L-aspartate = N-carbamoyl-L-aspartate + phosphate + H(+). The protein operates within pyrimidine metabolism; UMP biosynthesis via de novo pathway; (S)-dihydroorotate from bicarbonate: step 2/3. In terms of biological role, catalyzes the condensation of carbamoyl phosphate and aspartate to form carbamoyl aspartate and inorganic phosphate, the committed step in the de novo pyrimidine nucleotide biosynthesis pathway. This Psychrobacter cryohalolentis (strain ATCC BAA-1226 / DSM 17306 / VKM B-2378 / K5) protein is Aspartate carbamoyltransferase catalytic subunit.